An 850-amino-acid chain; its full sequence is Pentatricopeptide repeat-containing protein At3g49170, chloroplastic (850 aa).

A chloroplast-targeting transit peptide spans 1 to 50; sequence MAMISFSFPSPAKLPIKSQPSVSNRINVADRLILRHLNAGDLRGAVSALD. PPR repeat units follow at residues 61–95, 96–130, 131–164, 165–199, 201–232, 233–267, 268–302, 303–334, 335–370, 372–406, 407–437, 438–472, 473–507, 508–538, 539–573, 574–609, and 610–640; these read DSVT…DIEP, DSVL…GKRD, VVSW…GLVP, NDYC…GHFE, DVCV…MSEL, NVVT…GFES, DKFT…GLVD, DVEC…MEDH, SVMS…GHVE, NHFT…GLAS, NSSV…LSEK, NLVS…ELGV, SAFT…GLSC, NQPV…MENR, NVIS…GVKP, NEVT…KIKP, and KMEH…MPFQ. The tract at residues 645-720 is type E motif; the sequence is VWRTFLGACR…EGGCSWIEVG (76 aa). The type E(+) motif stretch occupies residues 721-751; sequence DKIHKFYVGDTAHPNAHQIYDELDRLITEIK. A type DYW motif region spans residues 752–850; that stretch reads RCGYVPDTDL…DGKCSCNDYW (99 aa).

It belongs to the PPR family. PCMP-H subfamily.

The protein resides in the plastid. The protein localises to the chloroplast. Functionally, may play a role in embryogenesis. This chain is Pentatricopeptide repeat-containing protein At3g49170, chloroplastic (EMB2261), found in Arabidopsis thaliana (Mouse-ear cress).